A 526-amino-acid chain; its full sequence is mRNA export factor ICP27 homolog (526 aa).

Residues Cys-239, His-344, Cys-346, and Cys-351 each coordinate Zn(2+). Residues 239-351 (CVFNDNGHGD…NNHQCDDIGC (113 aa)) form a CHC2-type zinc finger.

It belongs to the HHV-1 ICP27 protein family.

The protein resides in the virion tegument. It localises to the virion. It is found in the host nucleus. The protein localises to the host cytoplasm. In terms of biological role, immediate early (EI) protein that plays many roles during productive infection including regulation of viral gene expression and nuclear export of intronless viral RNAs. The sequence is that of mRNA export factor ICP27 homolog from Human herpesvirus 7 (strain JI) (HHV-7).